We begin with the raw amino-acid sequence, 393 residues long: Methylthioribose kinase (393 aa).

ATP contacts are provided by residues N38, K53, and 107-109; that span reads EDL. A substrate-binding site is contributed by D225. Residue 242 to 244 coordinates ATP; it reads DPE. Position 332 (R332) interacts with substrate.

The protein belongs to the methylthioribose kinase family. As to quaternary structure, homodimer.

It catalyses the reaction 5-(methylsulfanyl)-D-ribose + ATP = 5-(methylsulfanyl)-alpha-D-ribose 1-phosphate + ADP + H(+). Its pathway is amino-acid biosynthesis; L-methionine biosynthesis via salvage pathway; S-methyl-5-thio-alpha-D-ribose 1-phosphate from S-methyl-5'-thioadenosine (hydrolase route): step 2/2. Functionally, catalyzes the phosphorylation of methylthioribose into methylthioribose-1-phosphate. The chain is Methylthioribose kinase from Bacillus cereus (strain ATCC 14579 / DSM 31 / CCUG 7414 / JCM 2152 / NBRC 15305 / NCIMB 9373 / NCTC 2599 / NRRL B-3711).